Consider the following 411-residue polypeptide: uncharacterized protein (411 aa).

In terms of domain architecture, UmuC spans 20–199; it reads FLYFDFDAFF…LPITEIPGIG (180 aa).

The protein belongs to the DNA polymerase type-Y family.

This is an uncharacterized protein from Mycoplasma genitalium (strain ATCC 33530 / DSM 19775 / NCTC 10195 / G37) (Mycoplasmoides genitalium).